Reading from the N-terminus, the 128-residue chain is Large ribosomal subunit protein bL17 (128 aa).

The protein belongs to the bacterial ribosomal protein bL17 family. In terms of assembly, part of the 50S ribosomal subunit. Contacts protein L32.

In Streptococcus mutans serotype c (strain ATCC 700610 / UA159), this protein is Large ribosomal subunit protein bL17.